The primary structure comprises 526 residues: Bifunctional purine biosynthesis protein PurH (526 aa).

The MGS-like domain occupies 1-145; the sequence is MSKAPLALLS…KNHAHVGIVT (145 aa).

The protein belongs to the PurH family.

The catalysed reaction is (6R)-10-formyltetrahydrofolate + 5-amino-1-(5-phospho-beta-D-ribosyl)imidazole-4-carboxamide = 5-formamido-1-(5-phospho-D-ribosyl)imidazole-4-carboxamide + (6S)-5,6,7,8-tetrahydrofolate. It catalyses the reaction IMP + H2O = 5-formamido-1-(5-phospho-D-ribosyl)imidazole-4-carboxamide. The protein operates within purine metabolism; IMP biosynthesis via de novo pathway; 5-formamido-1-(5-phospho-D-ribosyl)imidazole-4-carboxamide from 5-amino-1-(5-phospho-D-ribosyl)imidazole-4-carboxamide (10-formyl THF route): step 1/1. It participates in purine metabolism; IMP biosynthesis via de novo pathway; IMP from 5-formamido-1-(5-phospho-D-ribosyl)imidazole-4-carboxamide: step 1/1. This is Bifunctional purine biosynthesis protein PurH from Psychrobacter cryohalolentis (strain ATCC BAA-1226 / DSM 17306 / VKM B-2378 / K5).